Reading from the N-terminus, the 140-residue chain is Arsenate-mycothiol transferase ArsC1 (140 aa).

The protein belongs to the low molecular weight phosphotyrosine protein phosphatase family.

It localises to the cytoplasm. It catalyses the reaction mycothiol + arsenate = arseno-mycothiol + H2O. In terms of biological role, involved in defense against toxic arsenate. Involved in the mycothiol/myoredoxin redox pathway which uses a mycothioltransferase mechanism; facilitates adduct formation between arsenate and mycothiol. In Corynebacterium glutamicum (strain ATCC 13032 / K051), this protein is Arsenate-mycothiol transferase ArsC1 (arsC1).